A 200-amino-acid polypeptide reads, in one-letter code: UPF0316 protein SACOL1973 (200 aa).

The next 3 helical transmembrane spans lie at 8–28 (PWLMVLTIFIINVCYVTFLTM), 40–60 (IAASVSFLEVLVYIVGLGLVM), and 66–86 (IQNIIAYAFGFSIGIIVGMKI).

It belongs to the UPF0316 family.

Its subcellular location is the cell membrane. This Staphylococcus aureus (strain COL) protein is UPF0316 protein SACOL1973.